We begin with the raw amino-acid sequence, 131 residues long: Large-conductance mechanosensitive channel (131 aa).

Transmembrane regions (helical) follow at residues 8 to 28, 30 to 50, and 67 to 87; these read FAMR…GAFG, IVSS…LGGV, and GMFI…FVFV.

This sequence belongs to the MscL family. In terms of assembly, homopentamer.

The protein localises to the cell membrane. Functionally, channel that opens in response to stretch forces in the membrane lipid bilayer. May participate in the regulation of osmotic pressure changes within the cell. The sequence is that of Large-conductance mechanosensitive channel from Geobacillus sp. (strain WCH70).